The sequence spans 241 residues: Small ribosomal subunit protein bS6 (241 aa).

The segment covering 97–108 (KPKIRERNRKYT) has biased composition (basic residues). Disordered regions lie at residues 97–187 (KPKI…HREN) and 199–241 (NKNH…QSSN). The segment covering 109-118 (PRRDRFDKPN) has biased composition (basic and acidic residues). Composition is skewed to low complexity over residues 130–151 (QDQQ…QTSQ), 161–180 (DDFQ…QQNQ), and 199–210 (NKNHQNQTSQTQ).

This sequence belongs to the bacterial ribosomal protein bS6 family.

In terms of biological role, binds together with bS18 to 16S ribosomal RNA. This is Small ribosomal subunit protein bS6 from Mesomycoplasma hyopneumoniae (strain 7448) (Mycoplasma hyopneumoniae).